The following is a 349-amino-acid chain: Alanine racemase (349 aa).

Lys-35 functions as the Proton acceptor; specific for D-alanine in the catalytic mechanism. Lys-35 carries the N6-(pyridoxal phosphate)lysine modification. Arg-130 provides a ligand contact to substrate. Tyr-244 serves as the catalytic Proton acceptor; specific for L-alanine. Met-292 is a substrate binding site.

The protein belongs to the alanine racemase family. Requires pyridoxal 5'-phosphate as cofactor.

It carries out the reaction L-alanine = D-alanine. It participates in amino-acid biosynthesis; D-alanine biosynthesis; D-alanine from L-alanine: step 1/1. Catalyzes the interconversion of L-alanine and D-alanine. May also act on other amino acids. This chain is Alanine racemase (alr), found in Cereibacter sphaeroides (strain ATCC 17023 / DSM 158 / JCM 6121 / CCUG 31486 / LMG 2827 / NBRC 12203 / NCIMB 8253 / ATH 2.4.1.) (Rhodobacter sphaeroides).